Reading from the N-terminus, the 97-residue chain is Anti-sigma-YlaC factor YlaD (97 aa).

Residues His29, Cys33, and Cys36 each coordinate Zn(2+). Residues 71 to 93 form a helical membrane-spanning segment; that stretch reads YYGLLIMKAACWFGAAVAMMLII.

This sequence belongs to the zinc-associated anti-sigma factor (ZAS) superfamily. Requires Zn(2+) as cofactor.

It localises to the cell membrane. In terms of biological role, anti-sigma factor for YlaC. This Bacillus subtilis (strain 168) protein is Anti-sigma-YlaC factor YlaD (ylaD).